The primary structure comprises 403 residues: GTPase Obg (403 aa).

The Obg domain occupies 1–159 (MKFIDESLIR…RDLLLELMLL (159 aa)). The OBG-type G domain maps to 160–333 (ADVGMLGFPN…LCRDIMDFII (174 aa)). Residues 166 to 173 (GFPNAGKS), 191 to 195 (FTTLV), 213 to 216 (DIPG), 283 to 286 (NKID), and 314 to 316 (SAA) each bind GTP. The Mg(2+) site is built by Ser173 and Thr193. Positions 363–403 (EYQFDDDEDWDDDWTEEDDDEDWDDDWTEEDDEGIEFIYKP) are disordered. Acidic residues predominate over residues 365-397 (QFDDDEDWDDDWTEEDDDEDWDDDWTEEDDEGI).

This sequence belongs to the TRAFAC class OBG-HflX-like GTPase superfamily. OBG GTPase family. Monomer. Mg(2+) serves as cofactor.

It localises to the cytoplasm. An essential GTPase which binds GTP, GDP and possibly (p)ppGpp with moderate affinity, with high nucleotide exchange rates and a fairly low GTP hydrolysis rate. Plays a role in control of the cell cycle, stress response, ribosome biogenesis and in those bacteria that undergo differentiation, in morphogenesis control. The sequence is that of GTPase Obg from Haemophilus influenzae (strain PittEE).